Consider the following 195-residue polypeptide: Segregation and condensation protein B (195 aa).

It belongs to the ScpB family. As to quaternary structure, homodimer. Homodimerization may be required to stabilize the binding of ScpA to the Smc head domains. Component of a cohesin-like complex composed of ScpA, ScpB and the Smc homodimer, in which ScpA and ScpB bind to the head domain of Smc. The presence of the three proteins is required for the association of the complex with DNA.

The protein localises to the cytoplasm. Its function is as follows. Participates in chromosomal partition during cell division. May act via the formation of a condensin-like complex containing Smc and ScpA that pull DNA away from mid-cell into both cell halves. The polypeptide is Segregation and condensation protein B (Clostridium perfringens (strain ATCC 13124 / DSM 756 / JCM 1290 / NCIMB 6125 / NCTC 8237 / Type A)).